Here is a 97-residue protein sequence, read N- to C-terminus: Thiosulfate sulfurtransferase/rhodanese-like domain-containing protein 3 (97 aa).

In terms of domain architecture, Rhodanese spans 32 to 84 (YKELKNLLNSKNIMLIDVREIWEILEYQKIPESINVPLDEVGEALQMNPRDFK). K84 carries the N6-succinyllysine modification.

In Homo sapiens (Human), this protein is Thiosulfate sulfurtransferase/rhodanese-like domain-containing protein 3 (TSTD3).